The chain runs to 508 residues: UDP-N-acetylmuramoyl-L-alanyl-D-glutamate--2,6-diaminopimelate ligase (508 aa).

Residue Ser43 coordinates UDP-N-acetyl-alpha-D-muramoyl-L-alanyl-D-glutamate. Gly124 to Thr130 is a binding site for ATP. Residues Thr166 to Thr167, Ser193, and Arg201 contribute to the UDP-N-acetyl-alpha-D-muramoyl-L-alanyl-D-glutamate site. N6-carboxylysine is present on Lys233. Residues Arg404, Asp428 to Arg431, Gly478, and Glu482 each bind meso-2,6-diaminopimelate. The Meso-diaminopimelate recognition motif signature appears at Asp428 to Arg431.

It belongs to the MurCDEF family. MurE subfamily. It depends on Mg(2+) as a cofactor. In terms of processing, carboxylation is probably crucial for Mg(2+) binding and, consequently, for the gamma-phosphate positioning of ATP.

Its subcellular location is the cytoplasm. The enzyme catalyses UDP-N-acetyl-alpha-D-muramoyl-L-alanyl-D-glutamate + meso-2,6-diaminopimelate + ATP = UDP-N-acetyl-alpha-D-muramoyl-L-alanyl-gamma-D-glutamyl-meso-2,6-diaminopimelate + ADP + phosphate + H(+). It functions in the pathway cell wall biogenesis; peptidoglycan biosynthesis. Catalyzes the addition of meso-diaminopimelic acid to the nucleotide precursor UDP-N-acetylmuramoyl-L-alanyl-D-glutamate (UMAG) in the biosynthesis of bacterial cell-wall peptidoglycan. In Chlorobaculum tepidum (strain ATCC 49652 / DSM 12025 / NBRC 103806 / TLS) (Chlorobium tepidum), this protein is UDP-N-acetylmuramoyl-L-alanyl-D-glutamate--2,6-diaminopimelate ligase.